A 361-amino-acid chain; its full sequence is Holliday junction branch migration complex subunit RuvB (361 aa).

The interval 1-21 (MHKDEDQRLLGAVPLPNDPDR) is disordered. The tract at residues 1–184 (MHKDEDQRLL…FGIPIRLNFY (184 aa)) is large ATPase domain (RuvB-L). ATP contacts are provided by residues L23, R24, G65, K68, T69, T70, 131–133 (EDY), R174, Y184, and R221. T69 is a Mg(2+) binding site. A small ATPAse domain (RuvB-S) region spans residues 185–255 (TIEELEYIVQ…IADEALSRLE (71 aa)). The head domain (RuvB-H) stretch occupies residues 258-361 (HLGLDPLDRR…QTVLWDEADD (104 aa)). DNA-binding residues include R294, R313, and R318.

The protein belongs to the RuvB family. As to quaternary structure, homohexamer. Forms an RuvA(8)-RuvB(12)-Holliday junction (HJ) complex. HJ DNA is sandwiched between 2 RuvA tetramers; dsDNA enters through RuvA and exits via RuvB. An RuvB hexamer assembles on each DNA strand where it exits the tetramer. Each RuvB hexamer is contacted by two RuvA subunits (via domain III) on 2 adjacent RuvB subunits; this complex drives branch migration. In the full resolvosome a probable DNA-RuvA(4)-RuvB(12)-RuvC(2) complex forms which resolves the HJ.

The protein resides in the cytoplasm. The catalysed reaction is ATP + H2O = ADP + phosphate + H(+). Its function is as follows. The RuvA-RuvB-RuvC complex processes Holliday junction (HJ) DNA during genetic recombination and DNA repair, while the RuvA-RuvB complex plays an important role in the rescue of blocked DNA replication forks via replication fork reversal (RFR). RuvA specifically binds to HJ cruciform DNA, conferring on it an open structure. The RuvB hexamer acts as an ATP-dependent pump, pulling dsDNA into and through the RuvAB complex. RuvB forms 2 homohexamers on either side of HJ DNA bound by 1 or 2 RuvA tetramers; 4 subunits per hexamer contact DNA at a time. Coordinated motions by a converter formed by DNA-disengaged RuvB subunits stimulates ATP hydrolysis and nucleotide exchange. Immobilization of the converter enables RuvB to convert the ATP-contained energy into a lever motion, pulling 2 nucleotides of DNA out of the RuvA tetramer per ATP hydrolyzed, thus driving DNA branch migration. The RuvB motors rotate together with the DNA substrate, which together with the progressing nucleotide cycle form the mechanistic basis for DNA recombination by continuous HJ branch migration. Branch migration allows RuvC to scan DNA until it finds its consensus sequence, where it cleaves and resolves cruciform DNA. The polypeptide is Holliday junction branch migration complex subunit RuvB (Bartonella henselae (strain ATCC 49882 / DSM 28221 / CCUG 30454 / Houston 1) (Rochalimaea henselae)).